A 595-amino-acid chain; its full sequence is Sialic acid-binding Ig-like lectin 12 (595 aa).

The N-terminal stretch at 1 to 18 is a signal peptide; sequence MLLLLLLLPPLLCGRVGA. Ig-like V-type domains lie at 19–142 and 143–269; these read KEQK…VNVT and ASQD…VHVT. Residues 19–481 lie on the Extracellular side of the membrane; sequence KEQKDYLLTM…RPISGVTLGA (463 aa). Cysteine 44 and cysteine 104 are joined by a disulfide. Residues asparagine 140, asparagine 179, asparagine 230, and asparagine 290 are each glycosylated (N-linked (GlcNAc...) asparagine). 3 disulfides stabilise this stretch: cysteine 166-cysteine 299, cysteine 171-cysteine 231, and cysteine 293-cysteine 342. The region spanning 275–358 is the Ig-like C2-type 1 domain; sequence PTFSIPGTLE…AGVTMTRAVR (84 aa). N-linked (GlcNAc...) asparagine glycans are attached at residues asparagine 360, asparagine 367, and asparagine 385. Residues 365–462 enclose the Ig-like C2-type 2 domain; that stretch reads PQNLTMTVFQ…GSQHISLSLS (98 aa). The cysteines at positions 401 and 446 are disulfide-linked. The helical transmembrane segment at 482–502 threads the bilayer; sequence FGGAGATALVFLYFCIIFVVV. Over 503–595 the chain is Cytoplasmic; that stretch reads RSCRKKSARP…YEYSEINIPK (93 aa). Residues 512–560 form a disordered region; sequence PAVGVGDTGMEDANAVRGSASQGPLIESPADDSPPHHAPPALATPSPEE. The short motif at 563–568 is the ITIM motif element; that stretch reads IQYASL. 2 positions are modified to phosphotyrosine: tyrosine 565 and tyrosine 588. An SLAM-like motif motif is present at residues 586–591; sequence YEYSEI.

This sequence belongs to the immunoglobulin superfamily. SIGLEC (sialic acid binding Ig-like lectin) family. Isoform Short is highly expressed in spleen, small intestine and adrenal gland; it is lower expressed in thyroid, placenta, brain, stomach, bone marrow, spinal cord and breast. Isoform Long is highly expressed in spleen, small intestine and bone marrow; it is lower expressed in thyroid, placenta, thymus, trachea, stomach, lung, adrenal gland, fetal brain and testis.

The protein resides in the membrane. Putative adhesion molecule that mediates sialic-acid dependent binding to cells. The sialic acid recognition site may be masked by cis interactions with sialic acids on the same cell surface. The sequence is that of Sialic acid-binding Ig-like lectin 12 (SIGLEC12) from Homo sapiens (Human).